Here is a 707-residue protein sequence, read N- to C-terminus: Choline transporter-like protein 4 (707 aa).

Over 1 to 32 (MGEKQDPDKAYGKPAKYDPSFRGPIRNRSCTD) the chain is Cytoplasmic. Residues 33 to 53 (IICCVLFFVFILGYIAVGLVA) form a helical membrane-spanning segment. The Extracellular segment spans residues 54–226 (WVYGDPQQVL…KIFEDFAQSW (173 aa)). Residues N67, N142, N184, and N195 are each glycosylated (N-linked (GlcNAc...) asparagine). The chain crosses the membrane as a helical span at residues 227–247 (YWILAALGVALVLSLLFVLLL). At 248-249 (RL) the chain is on the cytoplasmic side. Residues 250–270 (VAGPLVFVLIIGVLGVLAYGI) form a helical membrane-spanning segment. The Extracellular portion of the chain corresponds to 271 to 306 (YHCWNEYRLLRDKGASISQLGFTTNLSAYSSVQETW). N295 carries N-linked (GlcNAc...) asparagine glycosylation. Residues 307–327 (LAALILLAVLEGILLLMLIFL) form a helical membrane-spanning segment. Over 328–355 (RQRIRIAIALLEEASRAVGQMMSTLFYP) the chain is Cytoplasmic. The chain crosses the membrane as a helical span at residues 356 to 376 (LVTFVLLLVCIAYWAMTALYL). Topologically, residues 377-452 (ATSGQPQYVL…GVLGLFWTIN (76 aa)) are extracellular. N-linked (GlcNAc...) asparagine glycans are attached at residues N390, N402, and N413. Residues 453–473 (WVLALGQCVLAGAFASFYWAF) traverse the membrane as a helical segment. Over 474–498 (HKPRDIPTFPLSSAFIRTLRYHTGS) the chain is Cytoplasmic. A helical transmembrane segment spans residues 499-519 (LAFGALILTLVQIARAILEYI). Residues 520-557 (DHKLRGAQNPVARCIMCCFKCCLWCLEKFIKFLNRNAY) lie on the Extracellular side of the membrane. Residues 558 to 578 (IMIAIYGKNFCVSAKNAFMLL) form a helical membrane-spanning segment. The Cytoplasmic portion of the chain corresponds to 579 to 594 (MRNIVRVVVLDKVTDL). Residues 595–615 (LLFFGKLLVVGGVGVLSFFFF) traverse the membrane as a helical segment. Residues 616 to 635 (TGRIQGLGKDFESPQLNYYW) lie on the Extracellular side of the membrane. Residues 636–656 (LPIMTSIMGAYVIASGFFSVF) traverse the membrane as a helical segment. The Cytoplasmic segment spans residues 657–707 (GMCVDTLFLCFLEDLERNDGSLDRPYYMSKALLKILGKKNEVPSGDKKRKK).

Belongs to the CTL (choline transporter-like) family. Post-translationally, N-glycosylated; N-glycosylation of Asn-677 and Asn-390 is required for a proper thiamine pyrophosphate uptake.

It localises to the membrane. Its subcellular location is the apical cell membrane. The enzyme catalyses choline(out) + n H(+)(in) = choline(in) + n H(+)(out). The catalysed reaction is thiamine diphosphate(out) = thiamine diphosphate(in). Its function is as follows. Choline transporter that plays a role in the choline-acetylcholine system and is required to the efferent innervation of hair cells in the olivocochlear bundle for the maintenance of physiological function of outer hair cells and the protection of hair cells from acoustic injury. Also described as a thiamine pyrophosphate transporter in colon, may mediate the absorption of microbiota-generated thiamine pyrophosphate and contribute to host thiamine (vitamin B1) homeostasis. The protein is Choline transporter-like protein 4 of Sus scrofa (Pig).